The sequence spans 5289 residues: Mucin-2 (5289 aa).

The first 20 residues, 1–20, serve as a signal peptide directing secretion; the sequence is MGLPLARLAAVCLALSLAGG. A Phosphoserine modification is found at Ser21. His34 contacts Cu(2+). Positions 35 to 207 constitute a VWFD 1 domain; sequence NVCSTWGNFH…KINQPDVVCE (173 aa). Cystine bridges form between Cys37–Cys169, Cys59–Cys206, Cys67–Cys166, Cys218–Cys255, Cys225–Cys250, Cys237–Cys275, Cys257–Cys263, Cys265–Cys291, Cys295–Cys329, Cys308–Cys321, Cys312–Cys351, Cys331–Cys345, Cys353–Cys375, Cys370–Cys387, Cys373–Cys382, Cys391–Cys528, Cys413–Cys563, Cys435–Cys443, Cys574–Cys619, Cys588–Cys614, Cys601–Cys639, Cys621–Cys627, Cys629–Cys654, Cys661–Cys698, Cys674–Cys688, Cys678–Cys718, Cys700–Cys712, Cys720–Cys742, and Cys740–Cys749. Ca(2+) is bound at residue Asp49. Residues Met146 and Met154 each contribute to the Cu(+) site. Glu156 serves as a coordination point for Cu(2+). A glycan (N-linked (GlcNAc...) asparagine) is linked at Asn163. Residues Asp171, Asn173, Leu175, and Glu180 each contribute to the Ca(2+) site. Position 277 (His277) interacts with Cu(2+). In terms of domain architecture, TIL spans 295 to 351; the sequence is CPGNLVYLESGSPCMDTCSHLEVSSLCEEHRMDGCFCPEGTVYDDIGDSGCVPVSQC. Residue His324 coordinates Cu(2+). Residue Met326 participates in Cu(+) binding. The region spanning 389–564 is the VWFD 2 domain; that stretch reads GTCALEGGSH…NTWKAQSSCH (176 aa). Residue Asp403 coordinates Ca(2+). The N-linked (GlcNAc...) asparagine glycan is linked to Asn423. Ca(2+)-binding residues include Asn530, Asn532, Leu534, Asp537, and Asp538. N-linked (GlcNAc...) asparagine glycosylation occurs at Asn670. The N-linked (GlcNAc...) asparagine glycan is linked to Asn770. 21 disulfides stabilise this stretch: Cys784–Cys820, Cys802–Cys814, Cys822–Cys844, Cys839–Cys856, Cys842–Cys851, Cys860–Cys992, Cys882–Cys1027, Cys891–Cys989, Cys909–Cys916, Cys1037–Cys1080, Cys1051–Cys1075, Cys1062–Cys1102, Cys1082–Cys1090, Cys1092–Cys1117, Cys1108–Cys1137, Cys1121–Cys1163, Cys1145–Cys1187, Cys1167–Cys1181, Cys1189–Cys1213, Cys1208–Cys1238, and Cys1211–Cys1221. Residues 858–1028 enclose the VWFD 3 domain; sequence GTCSIYGSGH…NSWKEAPTCP (171 aa). Residue Asp872 participates in Ca(2+) binding. A glycan (N-linked (GlcNAc...) asparagine) is linked at Asn894. Residues Asn994, Asp996, Arg998, Asn1001, and Asp1002 each coordinate Ca(2+). Residues Asn1139 and Asn1154 are each glycosylated (N-linked (GlcNAc...) asparagine). 3 N-linked (GlcNAc...) asparagine glycosylation sites follow: Asn1215, Asn1230, and Asn1246. O-linked (GalNAc) threonine glycosylation is found at Thr1266, Thr1267, Thr1269, Thr1270, Thr1272, Thr1275, Thr1276, Thr1281, Thr1282, and Thr1287. 2 O-linked (GalNAc) serine glycosylation sites follow: Ser1291 and Ser1292. O-linked (GalNAc) threonine glycosylation is present at Thr1293. Ser1296 is a glycosylation site (O-linked (GalNAc) serine). Thr1297 carries an O-linked (GalNAc) threonine glycan. Residues Asn1310, Asp1312, His1313, Ser1316, Asp1319, Gly1321, Asp1322, Glu1324, Asp1381, and Tyr1382 each contribute to the Ca(2+) site. Composition is skewed to pro residues over residues 1399 to 1411, 1419 to 1510, 1520 to 1549, 1559 to 1628, and 1638 to 1679; these read PSPP…PPPT, TTTP…PITP, and TTTP…PPTT. Positions 1399–1773 are disordered; sequence PSPPTTTPSP…SITPPTFSPF (375 aa). 6 consecutive repeat copies span residues 1401–1416, 1417–1432, 1433–1448, 1449–1464, 1465–1471, and 1472–1478. Residues 1401 to 1747 are approximate repeats; sequence PPTTTPSPPP…SPPTTTMTTL (347 aa). The 7A repeat unit spans residues 1479–1494; it reads PPTTTPSPPTTTTTTP. The 7B repeat unit spans residues 1495 to 1517; sequence PPTTTPSPPTTTPITPPASTTTL. The stretch at 1518-1533 is one 8A repeat; it reads PPTTTPSPPTTTTTTP. One copy of the 8B repeat lies at 1534-1556; the sequence is PPTTTPSPPTTTPITPPTSTTTL. Residues 1557–1572 form a 9A repeat; it reads PPTTTPSPPPTTTTTP. The stretch at 1573–1596 is one 9B repeat; the sequence is PPTTTPSPPTTTTPSPPTITTTTP. A 10A repeat occupies 1597–1612; that stretch reads PPTTTPSPPTTTTTTP. Residues 1613-1635 form a 10B repeat; sequence PPTTTPSPPTTTPITPPTSTTTL. An 11A repeat occupies 1636–1651; that stretch reads PPTTTPSPPPTTTTTP. One copy of the 11B repeat lies at 1652–1675; it reads PPTTTPSPPTTTTPSPPITTTTTP. 5 repeat units span residues 1676-1683, 1684-1699, 1700-1715, 1716-1731, and 1732-1747. Composition is skewed to low complexity over residues 1680–1720 and 1741–1759; these read TPSS…STTT and TTTM…LTTT. A compositionally biased stretch (pro residues) spans 1760–1770; sequence PLPPSITPPTF. Asn1787 and Asn1820 each carry an N-linked (GlcNAc...) asparagine glycan. Low complexity-rich tracts occupy residues 1885–2158, 2165–4238, 4269–4315, and 4329–4430; these read MTTT…TMVT, GTQT…QTPT, TTVT…STAP, and STPQ…PSII. 2 disordered regions span residues 1885–4238 and 4269–4430; these read MTTT…QTPT and TTVT…PSII. Asn4449, Asn4461, Asn4472, and Asn4483 each carry an N-linked (GlcNAc...) asparagine glycan. Positions 4492 to 4524 are disordered; it reads PTPTPSKSTPTPSKPSSTPSKPTPGTKPPECPD. Low complexity predominate over residues 4496–4511; sequence PSKSTPTPSKPSSTPS. The span at 4512 to 4522 shows a compositional bias: pro residues; it reads KPTPGTKPPEC. 3 N-linked (GlcNAc...) asparagine glycosylation sites follow: Asn4532, Asn4548, and Asn4612. The 184-residue stretch at 4589–4772 folds into the VWFD 4 domain; that stretch reads CYCTGWGDPH…VNDPSKPHCP (184 aa). 3 disulfide bridges follow: Cys4591-Cys4732, Cys4613-Cys4771, and Cys4637-Cys4645. Asn4726 and Asn4737 each carry an N-linked (GlcNAc...) asparagine glycan. Residues 4770–4795 are disordered; the sequence is HCPHSSSTTKRPAVTVPGGGKTTPHK. Residues Asn4862, Asn4897, Asn4991, Asn4998, Asn5065, Asn5080, Asn5129, Asn5148, and Asn5179 are each glycosylated (N-linked (GlcNAc...) asparagine). The region spanning 4927-4996 is the VWFC 1 domain; that stretch reads CVGPDNVPRE…DTCCNITVCK (70 aa). Positions 5034–5101 constitute a VWFC 2 domain; it reads GVCVHGNAEY…APGECCKKCE (68 aa). Cystine bridges form between Cys5185–Cys5232, Cys5199–Cys5246, Cys5208–Cys5262, and Cys5212–Cys5264. A CTCK domain is found at 5185-5270; it reads CSTVPVTTEV…SCQCQDTVCG (86 aa).

In terms of assembly, homomultimer; disulfide-linked. The N- and C-terminus mediate their assembly into higher order structures to form filaments. The CTCK domains of two polypeptides associate in the endoplasmic reticulum to generate intermolecularly disulfide-bonded dimers. These dimers progress to the Golgi apparatus, which is a more acidic environment than the endoplasmic reticulum. Under acidic conditions, the N-termini form non-covalent intermolecular interactions that juxtapose assemblies of the third VWD domain (VWD3) from different CTCK-linked dimers. The VWD3 assemblies then become disulfide bonded to one another to produce long, disulfide-linked polymers that remain highly compact until secretion. Interacts with FCGBP. Interacts with AGR2; disulfide-linked. (Microbial infection) Interacts in vitro with L.monocytogenes internalin proteins InlB, InlC and InlJ; for InlC binding is slightly better at pH 5.5, (the pH of the intestine) than at pH 7.4. In terms of processing, O-glycosylated. O-glycosylation is required for mucin assembly. Goblet cells synthesize two forms of mucin that differ in branched chain O-glycosylation and the site of production in the colon. Post-translationally, may undergo proteolytic cleavage in the outer mucus layer of the colon, contributing to the expanded volume and loose nature of this layer which allows for bacterial colonization in contrast to the inner mucus layer which is dense and devoid of bacteria. At low pH of 6 and under, undergoes autocatalytic cleavage in vitro in the N-terminal region of the fourth VWD domain. It is likely that this also occurs in vivo and is triggered by the low pH of the late secretory pathway. In terms of tissue distribution, colon, small intestine, colonic tumors, bronchus, cervix and gall bladder.

The protein localises to the secreted. Coats the epithelia of the intestines and other mucus membrane-containing organs to provide a protective, lubricating barrier against particles and infectious agents at mucosal surfaces. Major constituent of the colon mucus, which is mainly formed by large polymeric networks of MUC2 secreted by goblet cells that cover the exposed surfaces of intestine. MUC2 networks form hydrogels that guard the underlying epithelium from pathogens and other hazardous matter entering from the outside world, while permitting nutrient absorption and gas exchange. Acts as a divalent copper chaperone that protects intestinal cells from copper toxicity and facilitates nutritional copper unptake into cells. Binds both Cu(2+) and its reduced form, Cu(1+), at two juxtaposed binding sites: Cu(2+), once reduced to Cu(1+) by vitamin C (ascorbate) or other dietary antioxidants, transits to the other binding site. MUC2-bound Cu(1+) is protected from oxidation in aerobic environments, and can be released for nutritional delivery to cells. Mucin gels store antimicrobial molecules that participate in innate immunity. Mucin glycoproteins also house and feed the microbiome, lubricate tissue surfaces, and may facilitate the removal of contaminants and waste products from the body. Goblet cells synthesize two forms of MUC2 mucin that differ in branched chain O-glycosylation and the site of production in the colon: a (1) 'thick' mucus that wraps the microbiota to form fecal pellets is produced in the proximal, ascending colon. 'Thick' mucus transits along the descending colon and is lubricated by a (2) 'thin' MUC2 mucus produced in the distal colon which adheres to the 'thick' mucus. The protein is Mucin-2 of Homo sapiens (Human).